A 98-amino-acid chain; its full sequence is Cell division protein FtsB (98 aa).

At 1–3 (MKR) the chain is on the cytoplasmic side. The helical transmembrane segment at 4–21 (LLIVLIALLAMLEYRLWF) threads the bilayer. The Periplasmic segment spans residues 22–98 (GDKSLAESFH…GGERDKPSND (77 aa)). Positions 31–74 (HLQEQIKLQQQSNAQLVARNQILREEISDLRSGTEALEERARNE) form a coiled coil.

Belongs to the FtsB family. In terms of assembly, part of a complex composed of FtsB, FtsL and FtsQ.

Its subcellular location is the cell inner membrane. Essential cell division protein. May link together the upstream cell division proteins, which are predominantly cytoplasmic, with the downstream cell division proteins, which are predominantly periplasmic. The sequence is that of Cell division protein FtsB from Shewanella halifaxensis (strain HAW-EB4).